A 677-amino-acid polypeptide reads, in one-letter code: Methionine--tRNA ligase (677 aa).

The 'HIGH' region motif lies at 15-25 (PYANGSIHLGH). Cysteine 146, cysteine 149, cysteine 159, and cysteine 162 together coordinate Zn(2+). Residues 333–337 (KMSKS) carry the 'KMSKS' region motif. Residue lysine 336 coordinates ATP. The tRNA-binding domain occupies 575 to 677 (DFAKVDLRVA…AGAKPGHQVK (103 aa)).

The protein belongs to the class-I aminoacyl-tRNA synthetase family. MetG type 1 subfamily. As to quaternary structure, homodimer. It depends on Zn(2+) as a cofactor.

It is found in the cytoplasm. It carries out the reaction tRNA(Met) + L-methionine + ATP = L-methionyl-tRNA(Met) + AMP + diphosphate. In terms of biological role, is required not only for elongation of protein synthesis but also for the initiation of all mRNA translation through initiator tRNA(fMet) aminoacylation. This is Methionine--tRNA ligase (metG) from Escherichia coli (strain K12).